The chain runs to 670 residues: Acetolactate synthase, chloroplastic (670 aa).

Composition is skewed to low complexity over residues 1-48 (MAAA…SSSS) and 55-77 (KSSS…TTPS). Residues 1 to 55 (MAAATTTTTTSSSISFSTKPSPSSSKSPLPISRFSLPFSLNPNKSSSSSRRRGIK) constitute a chloroplast transit peptide. Positions 1 to 94 (MAAATTTTTT…ETFISRFAPD (94 aa)) are disordered. E144 provides a ligand contact to thiamine diphosphate. S186 is an FAD binding site. Q207 contacts thiamine diphosphate. K220 and R246 together coordinate (R)-imazaquin. Residue R246 participates in FAD binding. K256 lines the chlorimuron-ethyl pocket. FAD-binding positions include G308 and 331–332 (TL). C340 is subject to Cysteine sulfinic acid (-SO2H). FAD is bound by residues 349–352 (LGMH) and 371–375 (GVRFD). 376–377 (DR) is a chlorimuron-ethyl binding site. FAD-binding positions include 395 to 396 (DI) and 414 to 415 (DV). Positions 414–446 (DVKLALQGMNKVLENRAEELKLDFGVWRNELNV) form a coiled coil. Position 487–488 (487–488 (QH)) interacts with thiamine diphosphate. 508 to 509 (GG) is a binding site for FAD. Residues 511-513 (GAM), 538-540 (DGS), and 565-570 (NQHLGM) contribute to the thiamine diphosphate site. Mg(2+)-binding residues include D538, N565, and H567. Residues W574 and S653 each contribute to the chlorimuron-ethyl site.

The protein belongs to the TPP enzyme family. As to quaternary structure, homodimer or homotetramer. The acetolactate synthase complex contains both large catalytic subunits and small regulatory subunits. Homodimer. The acetolactate synthase complex contains 4 homodimers of the large catalytic subunits, and 1 homotetramer of the small regulatory subunits. Requires Mg(2+) as cofactor. It depends on FAD as a cofactor. The cofactor is thiamine diphosphate.

It localises to the plastid. It is found in the chloroplast. It catalyses the reaction 2 pyruvate + H(+) = (2S)-2-acetolactate + CO2. Its pathway is amino-acid biosynthesis; L-isoleucine biosynthesis; L-isoleucine from 2-oxobutanoate: step 1/4. The protein operates within amino-acid biosynthesis; L-valine biosynthesis; L-valine from pyruvate: step 1/4. Its activity is regulated as follows. Inhibited by asymmetric aryl disulfides, triazolopyrimidine sulfonanilide compounds, isatin derivatives, and sulfonylurea and imidazolinone herbicides. Insensitive to feed-back inhibition by branched-chain amino acids. Catalyzes the formation of acetolactate from pyruvate, the first step in valine and isoleucine biosynthesis. The chain is Acetolactate synthase, chloroplastic (ALS) from Arabidopsis thaliana (Mouse-ear cress).